We begin with the raw amino-acid sequence, 482 residues long: UDP-N-acetylmuramoyl-L-alanyl-D-glutamate--2,6-diaminopimelate ligase (482 aa).

S24 contributes to the UDP-N-acetyl-alpha-D-muramoyl-L-alanyl-D-glutamate binding site. G105 to T111 lines the ATP pocket. UDP-N-acetyl-alpha-D-muramoyl-L-alanyl-D-glutamate-binding positions include T147–T148, S174, Q180, and R182. N6-carboxylysine is present on K214. Meso-2,6-diaminopimelate is bound by residues R378, D402–R405, G453, and E457. The Meso-diaminopimelate recognition motif signature appears at D402–R405.

This sequence belongs to the MurCDEF family. MurE subfamily. It depends on Mg(2+) as a cofactor. In terms of processing, carboxylation is probably crucial for Mg(2+) binding and, consequently, for the gamma-phosphate positioning of ATP.

The protein resides in the cytoplasm. It catalyses the reaction UDP-N-acetyl-alpha-D-muramoyl-L-alanyl-D-glutamate + meso-2,6-diaminopimelate + ATP = UDP-N-acetyl-alpha-D-muramoyl-L-alanyl-gamma-D-glutamyl-meso-2,6-diaminopimelate + ADP + phosphate + H(+). It participates in cell wall biogenesis; peptidoglycan biosynthesis. Functionally, catalyzes the addition of meso-diaminopimelic acid to the nucleotide precursor UDP-N-acetylmuramoyl-L-alanyl-D-glutamate (UMAG) in the biosynthesis of bacterial cell-wall peptidoglycan. The chain is UDP-N-acetylmuramoyl-L-alanyl-D-glutamate--2,6-diaminopimelate ligase from Lawsonia intracellularis (strain PHE/MN1-00).